Here is a 415-residue protein sequence, read N- to C-terminus: Carbamoyl phosphate synthase arginine-specific small chain (415 aa).

The N-terminal 17 residues, 1 to 17, are a transit peptide targeting the mitochondrion; it reads MLRFLKPFPLRFGKRFY. L-glutamine-binding residues include Ser88, Gly272, and Gly274. The Glutamine amidotransferase type-1 domain occupies 225 to 412; that stretch reads NIAVIDCGVK…IKEAIKYQKS (188 aa). The Nucleophile role is filled by Cys301. L-glutamine is bound by residues Met302, Gln305, Asn343, Gly345, and Tyr346. Residues His385 and Glu387 contribute to the active site.

It belongs to the CarA family. In terms of assembly, heterodimer composed of 2 chains; the small (or glutamine) chain promotes the hydrolysis of glutamine to ammonia, which is used by the large (or ammonia) chain to synthesize carbamoyl phosphate.

The protein resides in the mitochondrion. It is found in the cytoplasm. It catalyses the reaction hydrogencarbonate + L-glutamine + 2 ATP + H2O = carbamoyl phosphate + L-glutamate + 2 ADP + phosphate + 2 H(+). It carries out the reaction L-glutamine + H2O = L-glutamate + NH4(+). It participates in amino-acid biosynthesis; L-arginine biosynthesis; carbamoyl phosphate from bicarbonate: step 1/1. In terms of biological role, small subunit of the arginine-specific carbamoyl phosphate synthase (CPSase). CPSase catalyzes the formation of carbamoyl phosphate from the ammonia moiety of glutamine, carbonate, and phosphate donated by ATP, the first step of the arginine biosynthetic pathway. The small subunit (glutamine amidotransferase) binds and cleaves glutamine to supply the large subunit with the substrate ammonia. The sequence is that of Carbamoyl phosphate synthase arginine-specific small chain (arg5) from Schizosaccharomyces pombe (strain 972 / ATCC 24843) (Fission yeast).